The primary structure comprises 569 residues: Dihydroorotate dehydrogenase (quinone), mitochondrial (569 aa).

The N-terminal 23 residues, 1–23, are a transit peptide targeting the mitochondrion; the sequence is MISKLKPQFMFLPKKHILSYCRK. The chain crosses the membrane as a helical span at residues 143–163; the sequence is IIFLLFVSLFGLYGFFESYNP. FMN contacts are provided by residues 225–229 and Thr-249; that span reads AGFDK. Lys-229 contacts substrate. Residues 274–278 and Asn-342 contribute to the substrate site; that span reads NSCGF. Asn-342 provides a ligand contact to FMN. Catalysis depends on Ser-345, which acts as the Nucleophile. Asn-347 is a substrate binding site. Lys-429 serves as a coordination point for FMN. 458–459 contacts substrate; that stretch reads NT. FMN contacts are provided by residues 477-478, 505-507, and 528-529; these read SG, SGG, and YS.

This sequence belongs to the dihydroorotate dehydrogenase family. Type 2 subfamily. Monomer. The cofactor is FMN.

It localises to the mitochondrion inner membrane. The enzyme catalyses (S)-dihydroorotate + a quinone = orotate + a quinol. It participates in pyrimidine metabolism; UMP biosynthesis via de novo pathway; orotate from (S)-dihydroorotate (quinone route): step 1/1. In terms of biological role, catalyzes the conversion of dihydroorotate to orotate with quinone as electron acceptor. The sequence is that of Dihydroorotate dehydrogenase (quinone), mitochondrial from Plasmodium falciparum (isolate 3D7).